Reading from the N-terminus, the 299-residue chain is Release factor glutamine methyltransferase (299 aa).

S-adenosyl-L-methionine contacts are provided by residues 134 to 138 (GTGSG), Asp157, Trp186, and Asn203. 203–206 (NPPY) contacts substrate.

It belongs to the protein N5-glutamine methyltransferase family. PrmC subfamily.

It carries out the reaction L-glutaminyl-[peptide chain release factor] + S-adenosyl-L-methionine = N(5)-methyl-L-glutaminyl-[peptide chain release factor] + S-adenosyl-L-homocysteine + H(+). Functionally, methylates the class 1 translation termination release factors RF1/PrfA and RF2/PrfB on the glutamine residue of the universally conserved GGQ motif. The polypeptide is Release factor glutamine methyltransferase (Synechocystis sp. (strain ATCC 27184 / PCC 6803 / Kazusa)).